Here is a 92-residue protein sequence, read N- to C-terminus: Dynein light chain 1, cytoplasmic (92 aa).

The protein belongs to the dynein light chain family. As to quaternary structure, homodimer. Cytoplasmic dynein consists of two catalytic heavy chains (HCs) and a number of non-catalytic subunits which present intermediate chains (ICs), light intermediate chains (LICs) and light chains (LCs). Component of the nuclear pore complex (NPC). NPC constitutes the exclusive means of nucleocytoplasmic transport. NPCs allow the passive diffusion of ions and small molecules and the active, nuclear transport receptor-mediated bidirectional transport of macromolecules such as proteins, RNAs, ribonucleoparticles (RNPs), and ribosomal subunits across the nuclear envelope. Due to its 8-fold rotational symmetry, all subunits are present with 8 copies or multiples thereof. Part of the NUP82 subcomplex. In the complex, interacts directly with Nup159.

The protein resides in the cytoplasm. It localises to the cytoskeleton. It is found in the nucleus. The protein localises to the nuclear pore complex. Functionally, acts as one of several non-catalytic accessory components of the cytoplasmic dynein complex that are thought to be involved in linking dynein to cargos and to adapter proteins that regulate dynein function. Cytoplasmic dynein 1 acts as a motor for the intracellular retrograde motility of vesicles and organelles along microtubules. May play a role in changing or maintaining the spatial distribution of cytoskeletal structures. Also a component of the nuclear pore complex where it may contribute to the stable association of the Nup82 subcomplex with the NPC. The polypeptide is Dynein light chain 1, cytoplasmic (DYN2) (Saccharomyces cerevisiae (strain ATCC 204508 / S288c) (Baker's yeast)).